Consider the following 256-residue polypeptide: Protein FixA (256 aa).

This sequence belongs to the ETF beta-subunit/FixA family. In terms of assembly, heterodimer of FixA and FixB.

It participates in amine and polyamine metabolism; carnitine metabolism. Its function is as follows. Required for anaerobic carnitine reduction. May bring reductant to CaiA. The chain is Protein FixA from Escherichia coli O139:H28 (strain E24377A / ETEC).